Reading from the N-terminus, the 154-residue chain is Myoglobin (154 aa).

The Globin domain occupies 2–148; sequence GLSDGEWQIV…FRNDIAAKYK (147 aa). A Phosphoserine modification is found at serine 4. Histidine 65 serves as a coordination point for nitrite. Histidine 65 serves as a coordination point for O2. Threonine 68 is modified (phosphothreonine). Histidine 94 serves as a coordination point for heme b.

This sequence belongs to the globin family. Monomeric.

It localises to the cytoplasm. The protein localises to the sarcoplasm. It catalyses the reaction Fe(III)-heme b-[protein] + nitric oxide + H2O = Fe(II)-heme b-[protein] + nitrite + 2 H(+). The enzyme catalyses H2O2 + AH2 = A + 2 H2O. Monomeric heme protein which primary function is to store oxygen and facilitate its diffusion within muscle tissues. Reversibly binds oxygen through a pentacoordinated heme iron and enables its timely and efficient release as needed during periods of heightened demand. Depending on the oxidative conditions of tissues and cells, and in addition to its ability to bind oxygen, it also has a nitrite reductase activity whereby it regulates the production of bioactive nitric oxide. Under stress conditions, like hypoxia and anoxia, it also protects cells against reactive oxygen species thanks to its pseudoperoxidase activity. The polypeptide is Myoglobin (MB) (Canis lupus familiaris (Dog)).